Consider the following 301-residue polypeptide: uncharacterized protein (301 aa).

Disordered regions lie at residues 167–186 (DVHL…PKER) and 225–244 (ASES…EGAS). Over residues 170–181 (LNSTTPPHTAQV) the composition is skewed to polar residues. Over residues 226-237 (SESSLETSSVSS) the composition is skewed to low complexity.

This is an uncharacterized protein from Mus musculus (Mouse).